The chain runs to 410 residues: Homeobox protein Hox-A3a (410 aa).

The segment at 79-126 is disordered; it reads VTDTSDNKQPPTAPSGPSSPSSLNQIPNIDSAAKNPVHVSPTPSTRKH. Residues 127-132 carry the Antp-type hexapeptide motif; it reads IFPWMK. The segment at residues 163–222 is a DNA-binding region (homeobox); sequence SKRARTAYTSAQLVELEKEFHFNRYLCRPRRVEMANLLNLTERQIKIWFQNRRMKYKKDQ. Positions 222–249 are disordered; it reads QKGLGMMPSPGAQSPHSPVSLSSGGGGG.

The protein belongs to the Antp homeobox family.

It localises to the nucleus. Sequence-specific transcription factor which is part of a developmental regulatory system that provides cells with specific positional identities on the anterior-posterior axis. This is Homeobox protein Hox-A3a (hoxa3a) from Danio rerio (Zebrafish).